The sequence spans 699 residues: Epithelial sodium channel subunit alpha (699 aa).

The tract at residues 1–71 (MLDHTRAPEL…EPRQPTEEEE (71 aa)) is disordered. Residues 1 to 110 (MLDHTRAPEL…CSKHNRMKTA (110 aa)) are Cytoplasmic-facing. The chain crosses the membrane as a helical span at residues 111-131 (FWAVLWLCTFGMMYWQFALLF). Topologically, residues 132–589 (EEYFSYPVSL…SQWSLWFGSS (458 aa)) are extracellular. Intrachain disulfides connect Cys158/Cys332, Cys256/Cys263, Cys309/Cys316, Cys421/Cys506, Cys443/Cys483, Cys443/Cys502, Cys447/Cys498, Cys456/Cys483, Cys456/Cys506, and Cys458/Cys472. The gating release of inhibition by proteolysis (GRIP); protease-sensitive region that is responsible for the proteolytic activation of the channel stretch occupies residues 200–270 (RRRSTRDLRG…SDCFYQTYSS (71 aa)). The segment at 211–244 (LPHPLQRLRTPPPPNPARSARSASSSVRDNNPQV) is disordered. Residues 227-238 (ARSARSASSSVR) are compositionally biased toward low complexity. Residues 590-610 (VLSVVEMAELIFDLLVITLIM) traverse the membrane as a helical segment. The Cytoplasmic portion of the chain corresponds to 611–699 (LLHRFRSRYW…SSACAPAMAL (89 aa)). The tract at residues 637-699 (ASSFPSRFCP…SSACAPAMAL (63 aa)) is disordered. A compositionally biased stretch (low complexity) spans 656-667 (PQQGTTPPLALT). A PY motif; recruits WW domain-containing proteins and is thereby required for ubiquitination and inhibition of the channel by NEDD4 and NEDD4L motif is present at residues 669–673 (PPPAY).

This sequence belongs to the amiloride-sensitive sodium channel (TC 1.A.6) family. SCNN1A subfamily. Heterotrimer; containing an alpha/SCNN1A, a beta/SCNN1B and a gamma/SCNN1G subunit. Interacts with WWP1 (via WW domains). Interacts with WWP2 (via WW domains); inhibits the channel. Interacts with BPIFA1; the interaction is indirect via SCNN1B and inhibits the proteolytic processing of SCNN1A and SCNN1G and the activation of ENaC. Interacts with the full-length immature form of PCSK9 (pro-PCSK9). Post-translationally, ubiquitinated. Can be ubiquitinated at multiple sites and undergo monoubiquitination and polyubiquitination. Ubiquitination by NEDD4 or NEDD4L inhibits the ENaC channel through endocytosis, intracellular retention and degradation of its individual subunits. ENaC is activated through the proteolytic maturation of its subunits. Furin cleaves the SCNN1A subunit, which results in a stepwise increase in the open probability of the channel due to the release of an inhibitory tract. BPIFA1, which is recruited by the SCNN1B subunit, prevents the proteolytic activation of ENaC. In terms of processing, N-glycosylated. As to expression, expressed in kidney (at protein level). Expressed in lung (at protein level). Expressed in the epididymis (at protein level). In the caput and corpus regions of the epididymis, expressed uniformly on the luminal and basal surfaces of the ducts and in the sperm in the duct lumen. Also expressed in distal colon and, at low levels, in liver.

It is found in the apical cell membrane. Its subcellular location is the cell projection. The protein localises to the cilium. It localises to the cytoplasmic granule. The protein resides in the cytoplasm. It is found in the cytoplasmic vesicle. Its subcellular location is the secretory vesicle. The protein localises to the acrosome. It localises to the flagellum. It catalyses the reaction Na(+)(in) = Na(+)(out). Its activity is regulated as follows. Originally identified and characterized by its inhibition by the diuretic drug amiloride. Its function is as follows. This is one of the three pore-forming subunits of the heterotrimeric epithelial sodium channel (ENaC), a critical regulator of sodium balance and fluid homeostasis. ENaC operates in epithelial tissues, where it mediates the electrodiffusion of sodium ions from extracellular fluid through the apical membrane of cells, with water following osmotically. It plays a key role in maintaining sodium homeostasis through electrogenic sodium reabsorption in the kidneys. Additionally, ENaC is essential for airway surface liquid homeostasis, which is crucial for proper mucus clearance. The chain is Epithelial sodium channel subunit alpha from Mus musculus (Mouse).